We begin with the raw amino-acid sequence, 271 residues long: MSVHKSIKRITASEIQAKKKQEPIVSLTAYQAYSARIADPHCDFLLVGDSVGMIVHGFDTTLPVDVDMMILHGKAVMRGSQRALVVVDMPFGSYEKSPEQAFSNASRILADTGCGAVKLEGGIHMAKTIDFLCKRGIPVMSHIGLTPQAVNHFGGFKTQGRDKSDWEKIEADAAAIEDAGAFAVVVEAVVEPLAVKLTEKLSIPTIGIGASNQCDGQILVMEDMLGYGAWAPKFVRRYGTLEQAMDTAIRNYAEDVKSRAFPSDSEIYKLK.

Residues Asp-49 and Asp-88 each contribute to the Mg(2+) site. Residues 49–50 (DS), Asp-88, and Lys-118 contribute to the 3-methyl-2-oxobutanoate site. Mg(2+) is bound at residue Glu-120. Glu-187 (proton acceptor) is an active-site residue.

It belongs to the PanB family. As to quaternary structure, homodecamer; pentamer of dimers. Mg(2+) is required as a cofactor.

The protein resides in the cytoplasm. The enzyme catalyses 3-methyl-2-oxobutanoate + (6R)-5,10-methylene-5,6,7,8-tetrahydrofolate + H2O = 2-dehydropantoate + (6S)-5,6,7,8-tetrahydrofolate. It participates in cofactor biosynthesis; (R)-pantothenate biosynthesis; (R)-pantoate from 3-methyl-2-oxobutanoate: step 1/2. Its function is as follows. Catalyzes the reversible reaction in which hydroxymethyl group from 5,10-methylenetetrahydrofolate is transferred onto alpha-ketoisovalerate to form ketopantoate. In Bartonella bacilliformis (strain ATCC 35685 / KC583 / Herrer 020/F12,63), this protein is 3-methyl-2-oxobutanoate hydroxymethyltransferase.